Here is a 222-residue protein sequence, read N- to C-terminus: Thymidylate kinase (222 aa).

10 to 17 (GLEGAGKS) is an ATP binding site.

Belongs to the thymidylate kinase family.

It catalyses the reaction dTMP + ATP = dTDP + ADP. Phosphorylation of dTMP to form dTDP in both de novo and salvage pathways of dTTP synthesis. The polypeptide is Thymidylate kinase (Alteromonas mediterranea (strain DSM 17117 / CIP 110805 / LMG 28347 / Deep ecotype)).